The following is a 255-amino-acid chain: uncharacterized protein (255 aa).

This sequence belongs to the methyltransferase superfamily.

This is an uncharacterized protein from Bacillus subtilis (strain 168).